The chain runs to 408 residues: Arginine biosynthesis bifunctional protein ArgJ (408 aa).

Substrate is bound by residues Thr-156, Lys-182, Thr-193, Glu-279, Asn-403, and Ser-408. The active-site Nucleophile is Thr-193.

The protein belongs to the ArgJ family. Heterotetramer of two alpha and two beta chains.

Its subcellular location is the cytoplasm. The catalysed reaction is N(2)-acetyl-L-ornithine + L-glutamate = N-acetyl-L-glutamate + L-ornithine. It catalyses the reaction L-glutamate + acetyl-CoA = N-acetyl-L-glutamate + CoA + H(+). It participates in amino-acid biosynthesis; L-arginine biosynthesis; L-ornithine and N-acetyl-L-glutamate from L-glutamate and N(2)-acetyl-L-ornithine (cyclic): step 1/1. The protein operates within amino-acid biosynthesis; L-arginine biosynthesis; N(2)-acetyl-L-ornithine from L-glutamate: step 1/4. Its function is as follows. Catalyzes two activities which are involved in the cyclic version of arginine biosynthesis: the synthesis of N-acetylglutamate from glutamate and acetyl-CoA as the acetyl donor, and of ornithine by transacetylation between N(2)-acetylornithine and glutamate. The chain is Arginine biosynthesis bifunctional protein ArgJ from Bordetella bronchiseptica (strain ATCC BAA-588 / NCTC 13252 / RB50) (Alcaligenes bronchisepticus).